The following is a 480-amino-acid chain: Aspartyl/glutamyl-tRNA(Asn/Gln) amidotransferase subunit B (480 aa).

It belongs to the GatB/GatE family. GatB subfamily. Heterotrimer of A, B and C subunits.

It catalyses the reaction L-glutamyl-tRNA(Gln) + L-glutamine + ATP + H2O = L-glutaminyl-tRNA(Gln) + L-glutamate + ADP + phosphate + H(+). The enzyme catalyses L-aspartyl-tRNA(Asn) + L-glutamine + ATP + H2O = L-asparaginyl-tRNA(Asn) + L-glutamate + ADP + phosphate + 2 H(+). Its function is as follows. Allows the formation of correctly charged Asn-tRNA(Asn) or Gln-tRNA(Gln) through the transamidation of misacylated Asp-tRNA(Asn) or Glu-tRNA(Gln) in organisms which lack either or both of asparaginyl-tRNA or glutaminyl-tRNA synthetases. The reaction takes place in the presence of glutamine and ATP through an activated phospho-Asp-tRNA(Asn) or phospho-Glu-tRNA(Gln). The protein is Aspartyl/glutamyl-tRNA(Asn/Gln) amidotransferase subunit B of Caldicellulosiruptor bescii (strain ATCC BAA-1888 / DSM 6725 / KCTC 15123 / Z-1320) (Anaerocellum thermophilum).